Reading from the N-terminus, the 436-residue chain is MNFFVIGVNHKTAPVEVRERFAIPESRLPEATKLLASYPGIEEGMIVSTCNRVEMVARSVNGNADMRGFLKQLYNIDPAQYEQYLYEYRSTEAVRHMFRVASSLDSMVVGEPQILGQVKEAYATARAVGAVSSQLDALLTRAFAVAKRVRTDTSIASSSVSIASVAVELAKKIFGSLQGRSVYIVGAGKMCELAARHFVAHGVEKIYVANRTYERGVAFAKKFNGEAVPIEHLYETVDKADIVLSSTGAPIAIFRKEHGEKFLSRRKNRPMFFLDIAVPRDVDAKMNELDGIFVYDIDDLQQVVHSHISDRKDEAAHAEAIVNAEVEKFEERLRTLDVVPTIVSLQEHLETVRQAEIDRLRGRLGELSPEQEMAVDALTKGIINKIMHTPITTLKTAAKEPESTTVIELVKRIFNLHEKAKDETVKTGPPQSGPGK.

Substrate-binding positions include 49–52, Ser106, 111–113, and Gln117; these read TCNR and EPQ. Cys50 serves as the catalytic Nucleophile. Position 186 to 191 (186 to 191) interacts with NADP(+); the sequence is GAGKMC.

The protein belongs to the glutamyl-tRNA reductase family. In terms of assembly, homodimer.

The enzyme catalyses (S)-4-amino-5-oxopentanoate + tRNA(Glu) + NADP(+) = L-glutamyl-tRNA(Glu) + NADPH + H(+). Its pathway is porphyrin-containing compound metabolism; protoporphyrin-IX biosynthesis; 5-aminolevulinate from L-glutamyl-tRNA(Glu): step 1/2. Its function is as follows. Catalyzes the NADPH-dependent reduction of glutamyl-tRNA(Glu) to glutamate 1-semialdehyde (GSA). The polypeptide is Glutamyl-tRNA reductase 2 (Koribacter versatilis (strain Ellin345)).